The primary structure comprises 317 residues: 4-diphosphocytidyl-2-C-methyl-D-erythritol kinase (317 aa).

Residue Lys17 is part of the active site. An ATP-binding site is contributed by 109-119; sequence PVAGGMGGGSA. Residue Asp151 is part of the active site.

The protein belongs to the GHMP kinase family. IspE subfamily.

It carries out the reaction 4-CDP-2-C-methyl-D-erythritol + ATP = 4-CDP-2-C-methyl-D-erythritol 2-phosphate + ADP + H(+). It participates in isoprenoid biosynthesis; isopentenyl diphosphate biosynthesis via DXP pathway; isopentenyl diphosphate from 1-deoxy-D-xylulose 5-phosphate: step 3/6. Catalyzes the phosphorylation of the position 2 hydroxy group of 4-diphosphocytidyl-2C-methyl-D-erythritol. The protein is 4-diphosphocytidyl-2-C-methyl-D-erythritol kinase of Paenarthrobacter aurescens (strain TC1).